Here is an 81-residue protein sequence, read N- to C-terminus: Cell division protein ZapB (81 aa).

A coiled-coil region spans residues 5–81 (LEVFEKLESK…QALLGRMEEV (77 aa)). Positions 43–64 (VQSAQHGREELERENSQLKEQQ) are disordered. Over residues 48–59 (HGREELERENSQ) the composition is skewed to basic and acidic residues.

It belongs to the ZapB family. Homodimer. The ends of the coiled-coil dimer bind to each other, forming polymers. Interacts with FtsZ.

It localises to the cytoplasm. Its function is as follows. Non-essential, abundant cell division factor that is required for proper Z-ring formation. It is recruited early to the divisome by direct interaction with FtsZ, stimulating Z-ring assembly and thereby promoting cell division earlier in the cell cycle. Its recruitment to the Z-ring requires functional FtsA or ZipA. The polypeptide is Cell division protein ZapB (Klebsiella pneumoniae subsp. pneumoniae (strain ATCC 700721 / MGH 78578)).